A 1262-amino-acid chain; its full sequence is SCL-interrupting locus protein homolog (1262 aa).

The segment at 1–992 (MNTRFPSSKM…IDSPTKVKKN (992 aa)) is interaction with RBM14. Residues 220–762 (YKHGYITMDE…VSMEAQSSPG (543 aa)) form an interaction with CPAP region. Disordered stretches follow at residues 369–409 (RSSQ…QKIS), 454–551 (LCDA…LAPQ), and 650–670 (GGMGAYSPHSNGEPSPVAGPS). 3 stretches are compositionally biased toward polar residues: residues 473–493 (PTNQLSQDTALRQSRGKQSST), 500–512 (QFRNTNAKPSLSV), and 540–551 (TLDSRQPSLAPQ). The interval 567–760 (PMELQVPTPS…ELVSMEAQSS (194 aa)) is PIN1-binding. Residues Ser733 and Ser760 each carry the phosphoserine modification. Disordered regions lie at residues 782 to 804 (NAAGDDQEPDSQPKQDDTKISSE), 883 to 904 (APTEGASNSTELPQGTKDEPYR), 925 to 959 (NASQETEEPPTKAVVTNRECAKTQNTHHARKKRHN), and 1106 to 1129 (SSDNSEDEEEPPSHADSESDHVLN). Basic and acidic residues predominate over residues 792 to 803 (SQPKQDDTKISS). The segment covering 883–895 (APTEGASNSTELP) has biased composition (polar residues). Positions 949-959 (NTHHARKKRHN) are enriched in basic residues. Ser1110 is subject to Phosphoserine. Residues 1116-1128 (PPSHADSESDHVL) show a composition bias toward basic and acidic residues.

As to quaternary structure, homodimer. Interacts with PIN1 via its WW domain. This interaction is dependent on Stil mitotic phosphorylation. Interacts with CPAP. Interacts with RBM14 and this interaction interferes with the interaction of STIL with CPAP. Forms a complex with CPAP and SASS6. nteracts (via N-terminus) with CEP85; this interaction is essential for efficient centriolar targeting of STIL and subsequent PLK4 activation. Ubiquitinated. Post-translationally, phosphorylated following the activation of the mitotic checkpoint. Ubiquitously expressed in adult and fetal tissues. Highly expressed in hematopoietic tissues such as thymus, bone marrow and spleen.

Its subcellular location is the cytoplasm. It localises to the cytosol. The protein resides in the cytoskeleton. The protein localises to the microtubule organizing center. It is found in the centrosome. Its subcellular location is the centriole. It localises to the cell cortex. In terms of biological role, immediate-early gene. Plays an important role in embryonic development as well as in cellular growth and proliferation; its long-term silencing affects cell survival and cell cycle distribution as well as decreases CDK1 activity correlated with reduced phosphorylation of CDK1. Plays a role as a positive regulator of the sonic hedgehog pathway, acting downstream of PTCH1. Plays an important role in the regulation of centriole duplication. Required for the onset of procentriole formation and proper mitotic progression. During procentriole formation, is essential for the correct loading of SASS6 and CPAP to the base of the procentriole to initiate procentriole assembly. In complex with STIL acts as a modulator of PLK4-driven cytoskeletal rearrangements and directional cell motility. The sequence is that of SCL-interrupting locus protein homolog (Stil) from Mus musculus (Mouse).